A 564-amino-acid polypeptide reads, in one-letter code: Probable cysteine--tRNA ligase, mitochondrial (564 aa).

Cys78 is a binding site for Zn(2+). Position 79 (Gly79) interacts with L-cysteine. A 'HIGH' region motif is present at residues 80–90 (PTVYDHAHLGH). Thr119 is a binding site for L-cysteine. Positions 124-127 (KIIK) match the 'KIIK' region motif. Zn(2+)-binding residues include Cys257, His282, and Glu286. His282 lines the L-cysteine pocket. The 'KMSKS' region motif lies at 317–321 (KMSKS). Lys320 lines the ATP pocket.

This sequence belongs to the class-I aminoacyl-tRNA synthetase family. It depends on Zn(2+) as a cofactor.

It is found in the mitochondrion. The enzyme catalyses tRNA(Cys) + L-cysteine + ATP = L-cysteinyl-tRNA(Cys) + AMP + diphosphate. It catalyses the reaction 2 L-cysteine = S-sulfanyl-L-cysteine + L-alanine. The catalysed reaction is S-sulfanyl-L-cysteine + L-cysteine = S-disulfanyl-L-cysteine + L-alanine. It carries out the reaction S-sulfanyl-L-cysteine + tRNA(Cys) + ATP = (S)-sulfanyl-L-cysteinyl-tRNA(Cys) + AMP + diphosphate. The enzyme catalyses S-disulfanyl-L-cysteine + tRNA(Cys) + ATP = (S)-disulfanyl-L-cysteinyl-tRNA(Cys) + AMP + diphosphate. In terms of biological role, mitochondrial cysteine-specific aminoacyl-tRNA synthetase that catalyzes the ATP-dependent ligation of cysteine to tRNA(Cys). In addition to its role as an aminoacyl-tRNA synthetase, has also cysteine persulfide synthase activity. Produces reactive persulfide species such as cysteine persulfide (CysSSH) from substrate cysteine and mediate direct incorporation of CysSSH into proteins during translations, resulting in protein persulfides and polysulfides. CysSSHs behave as potent antioxidants and cellular protectants. This Homo sapiens (Human) protein is Probable cysteine--tRNA ligase, mitochondrial.